We begin with the raw amino-acid sequence, 662 residues long: Serine/threonine-protein kinase PTK1/STK1 (662 aa).

Residues 35-119 (GNKLKKKASL…SSTSRNLSNS (85 aa)) are disordered. Low complexity predominate over residues 50-60 (STSTNDSESSS). 2 stretches are compositionally biased toward polar residues: residues 61–91 (PKLP…SAST) and 98–119 (GSST…LSNS). The Protein kinase domain occupies 196 to 503 (DDENKTIGWG…IDDLFEDPWF (308 aa)). ATP-binding positions include 202 to 210 (IGWGGSCEV) and lysine 226. Aspartate 329 functions as the Proton acceptor in the catalytic mechanism. A disordered region spans residues 605 to 631 (TLTLSEEPPATPAPSAPSAPSARVRGH).

This sequence belongs to the protein kinase superfamily. Ser/Thr protein kinase family.

The enzyme catalyses L-seryl-[protein] + ATP = O-phospho-L-seryl-[protein] + ADP + H(+). It carries out the reaction L-threonyl-[protein] + ATP = O-phospho-L-threonyl-[protein] + ADP + H(+). Essential determinant for low-affinity spermidine transport. The sequence is that of Serine/threonine-protein kinase PTK1/STK1 (PTK1) from Saccharomyces cerevisiae (strain ATCC 204508 / S288c) (Baker's yeast).